The primary structure comprises 173 residues: Large ribosomal subunit protein uL16 (173 aa).

The protein belongs to the universal ribosomal protein uL16 family.

The chain is Large ribosomal subunit protein uL16 from Methanococcus maripaludis (strain DSM 14266 / JCM 13030 / NBRC 101832 / S2 / LL).